We begin with the raw amino-acid sequence, 366 residues long: MLIWLVELSEYFKFLNLFRYITFRTGAALFTSALIVFLFGPTIINSLRIRQGKGQPIRADGPQTHFKKAGTPTMGGLMILAGIVGASLLWADLSNVYVVATLLVTLGFGAIGFYDDYLKVTKQSHMGFSGKARLGIEFVIAGIAVYFMMRTALASGVAGSTFGSSIAFPFFKDFMINIGIMFVVFGGFVIVGAGNAVNLTDGLDGLAIVPVMIAAASFGVIAYLAGNVVFANYLQINFVPGTGELAVVLGAVIGAGLGFLWFNAPPAAIFMGDTGSLALGGTIGTVAVATKHEIVMAIIGGLFVMETLSVIIQVGFFKMTGRRVFLMAPIHHHFEKKGWTESQVVIRFWIIAVGLAMLGLSTLKLR.

A run of 10 helical transmembrane segments spans residues 27–47, 71–91, 93–113, 134–154, 174–194, 205–225, 245–265, 268–288, 294–314, and 343–363; these read AALF…INSL, TPTM…LLWA, LSNV…AIGF, LGIE…TALA, FMIN…VGAG, GLAI…AYLA, LAVV…FNAP, AIFM…TVAV, IVMA…IIQV, and QVVI…LSTL.

The protein belongs to the glycosyltransferase 4 family. MraY subfamily. The cofactor is Mg(2+).

It is found in the cell inner membrane. The enzyme catalyses UDP-N-acetyl-alpha-D-muramoyl-L-alanyl-gamma-D-glutamyl-meso-2,6-diaminopimeloyl-D-alanyl-D-alanine + di-trans,octa-cis-undecaprenyl phosphate = di-trans,octa-cis-undecaprenyl diphospho-N-acetyl-alpha-D-muramoyl-L-alanyl-D-glutamyl-meso-2,6-diaminopimeloyl-D-alanyl-D-alanine + UMP. Its pathway is cell wall biogenesis; peptidoglycan biosynthesis. In terms of biological role, catalyzes the initial step of the lipid cycle reactions in the biosynthesis of the cell wall peptidoglycan: transfers peptidoglycan precursor phospho-MurNAc-pentapeptide from UDP-MurNAc-pentapeptide onto the lipid carrier undecaprenyl phosphate, yielding undecaprenyl-pyrophosphoryl-MurNAc-pentapeptide, known as lipid I. The protein is Phospho-N-acetylmuramoyl-pentapeptide-transferase of Rhizobium leguminosarum bv. trifolii (strain WSM2304).